The primary structure comprises 159 residues: Nucleotide-binding protein PSPA7_4966 (159 aa).

Belongs to the YajQ family.

Nucleotide-binding protein. This chain is Nucleotide-binding protein PSPA7_4966, found in Pseudomonas paraeruginosa (strain DSM 24068 / PA7) (Pseudomonas aeruginosa (strain PA7)).